The following is a 125-amino-acid chain: uncharacterized protein (125 aa).

The interval 50–73 is disordered; sequence QTSDFSDESSRSDSSSVTNENEVS.

This is an uncharacterized protein from Microplitis demolitor (Parasitoid wasp).